Here is a 140-residue protein sequence, read N- to C-terminus: Lymphocyte antigen 6 complex locus protein G5c (140 aa).

The first 41 residues, 1-41, serve as a signal peptide directing secretion; that stretch reads MRFMAGPAGSQNPGPMCFHSSLQALYTVLLIVLVMMSLVFG. One can recognise a UPAR/Ly6 domain in the interval 60–140; the sequence is LRCYRCLLET…SQCCFLGFLQ (81 aa). 4 disulfides stabilise this stretch: Cys62–Cys89, Cys65–Cys74, Cys81–Cys107, and Cys116–Cys133. N-linked (GlcNAc...) asparagine glycosylation occurs at Asn96.

As to quaternary structure, forms oligomers. In terms of processing, N-glycosylated.

The protein resides in the secreted. May have a role in hematopoietic cell differentiation. This Macaca mulatta (Rhesus macaque) protein is Lymphocyte antigen 6 complex locus protein G5c (LY6G5C).